A 737-amino-acid polypeptide reads, in one-letter code: Disintegrin and metalloproteinase domain-containing protein 2 (737 aa).

The signal sequence occupies residues 1–18 (MWLLLLLLSGLSRLGGLS). A propeptide spanning residues 19–180 (EPQTEGTREK…YKIRSIKPQR (162 aa)) is cleaved from the precursor. The Extracellular segment spans residues 19-688 (EPQTEGTREK…ASAYRSKSAR (670 aa)). N-linked (GlcNAc...) asparagine glycans are attached at residues N128 and N226. One can recognise a Peptidase M12B domain in the interval 184-381 (HYLEIHIVVE…QSSHCLQNQP (198 aa)). 4 cysteine pairs are disulfide-bonded: C293-C376, C335-C360, C337-C342, and C450-C470. N-linked (GlcNAc...) asparagine glycosylation is found at N359, N464, N491, and N571. A Disintegrin domain is found at 389 to 478 (MAVCGNGELE…VCEEDFFVQD (90 aa)). Residues 617–650 (LNYDCTPEKCNHHGVCNNKKHCHCEPTYLPPDCK) enclose the EGF-like domain. 3 disulfide bridges follow: C621–C632, C626–C638, and C640–C649. Residues 689-709 (WPFFLIIPFYVVILVLIGMLV) form a helical membrane-spanning segment. Topologically, residues 710–737 (KVYSQRKKWRMDDFSSEEQFESESESKD) are cytoplasmic. S731 carries the phosphoserine modification.

Heterodimer with ADAM1/fertilin subunit alpha. The prodomain and the metalloprotease domain are cleaved during the epididymal maturation of the spermatozoa.

It is found in the membrane. Sperm surface membrane protein that may be involved in sperm-egg plasma membrane adhesion and fusion during fertilization. Could have a direct role in sperm-zona binding or migration of sperm from the uterus into the oviduct. Interactions with egg membrane could be mediated via binding between its disintegrin-like domain to one or more integrins receptors on the egg. This is a non catalytic metalloprotease-like protein. The chain is Disintegrin and metalloproteinase domain-containing protein 2 (Adam2) from Rattus norvegicus (Rat).